The following is a 653-amino-acid chain: 2-oxoglutarate oxidoreductase subunit KorA (653 aa).

The segment at 1–21 is disordered; the sequence is MDPNGSGAGPESHDAAFHAAP. The span at 11-21 shows a compositional bias: basic and acidic residues; it reads ESHDAAFHAAP.

KG oxidoreductase (KOR) is composed of KorA and KorB subunits.

The enzyme catalyses 2 oxidized [2Fe-2S]-[ferredoxin] + 2-oxoglutarate + CoA = succinyl-CoA + 2 reduced [2Fe-2S]-[ferredoxin] + CO2 + H(+). It functions in the pathway carbohydrate metabolism; tricarboxylic acid cycle. Its function is as follows. Component of KG oxidoreductase (KOR) that catalyzes the CoA-dependent oxidative decarboxylation of 2-oxoglutarate (alpha-ketoglutarate, KG) to succinyl-CoA. Methyl viologen can act as electron acceptor in vitro; the physiologic electron acceptor is unknown. Is involved in the alternative TCA pathway that functions concurrently with fatty acid beta-oxidation. Since a growing body of evidence indicates that lipids (for example cholesterol and fatty acids) are a predominant growth substrate for M.tuberculosis during infection, flux through KOR likely represents an important step in intermediary metabolism in vivo. KOR-dependent decarboxylation of KG also appears to be an important source of CO(2) in M.tuberculosis metabolism. The polypeptide is 2-oxoglutarate oxidoreductase subunit KorA (korA) (Mycobacterium tuberculosis (strain ATCC 25618 / H37Rv)).